Reading from the N-terminus, the 367-residue chain is Glutamate 5-kinase (367 aa).

Position 10 (Lys-10) interacts with ATP. Residues Ser-50, Asp-137, and Asn-149 each contribute to the substrate site. ATP-binding positions include 169-170 (TD) and 211-217 (TGGMSTK). Positions 275-353 (AGEITVDEGA…QEIDAILGYE (79 aa)) constitute a PUA domain.

It belongs to the glutamate 5-kinase family.

The protein localises to the cytoplasm. The enzyme catalyses L-glutamate + ATP = L-glutamyl 5-phosphate + ADP. It participates in amino-acid biosynthesis; L-proline biosynthesis; L-glutamate 5-semialdehyde from L-glutamate: step 1/2. Functionally, catalyzes the transfer of a phosphate group to glutamate to form L-glutamate 5-phosphate. This is Glutamate 5-kinase from Escherichia coli O81 (strain ED1a).